We begin with the raw amino-acid sequence, 230 residues long: Urease accessory protein UreE (230 aa).

Residues 197–230 (LHIHAIHSHGDGDSHNHDHDHSHSHGDHDHDHKH) are disordered. The span at 204–230 (SHGDGDSHNHDHDHSHSHGDHDHDHKH) shows a compositional bias: basic and acidic residues.

Belongs to the UreE family.

The protein resides in the cytoplasm. In terms of biological role, involved in urease metallocenter assembly. Binds nickel. Probably functions as a nickel donor during metallocenter assembly. In Yersinia aldovae, this protein is Urease accessory protein UreE.